The primary structure comprises 118 residues: UPF0449 protein C19orf25 homolog (118 aa).

Phosphotyrosine is present on tyrosine 63. A coiled-coil region spans residues 69–105 (YVAMNQRLQQAGAQLEQKRADLQQAGEELERDISQVG).

Belongs to the UPF0449 family.

The protein is UPF0449 protein C19orf25 homolog of Bos taurus (Bovine).